The chain runs to 885 residues: Alanine--tRNA ligase (885 aa).

Histidine 564, histidine 568, cysteine 676, and histidine 680 together coordinate Zn(2+).

It belongs to the class-II aminoacyl-tRNA synthetase family. It depends on Zn(2+) as a cofactor.

The protein resides in the cytoplasm. It catalyses the reaction tRNA(Ala) + L-alanine + ATP = L-alanyl-tRNA(Ala) + AMP + diphosphate. Functionally, catalyzes the attachment of alanine to tRNA(Ala) in a two-step reaction: alanine is first activated by ATP to form Ala-AMP and then transferred to the acceptor end of tRNA(Ala). Also edits incorrectly charged Ser-tRNA(Ala) and Gly-tRNA(Ala) via its editing domain. The polypeptide is Alanine--tRNA ligase (Brucella abortus (strain 2308)).